The sequence spans 279 residues: Large ribosomal subunit protein uL2 (279 aa).

Disordered stretches follow at residues glutamate 30 to lysine 59 and valine 225 to arginine 279. Basic residues predominate over residues threonine 50–lysine 59. Basic and acidic residues predominate over residues proline 253–isoleucine 268. The span at valine 269–arginine 279 shows a compositional bias: basic residues.

Belongs to the universal ribosomal protein uL2 family. In terms of assembly, part of the 50S ribosomal subunit. Forms a bridge to the 30S subunit in the 70S ribosome.

Functionally, one of the primary rRNA binding proteins. Required for association of the 30S and 50S subunits to form the 70S ribosome, for tRNA binding and peptide bond formation. It has been suggested to have peptidyltransferase activity; this is somewhat controversial. Makes several contacts with the 16S rRNA in the 70S ribosome. This is Large ribosomal subunit protein uL2 from Kocuria rhizophila (strain ATCC 9341 / DSM 348 / NBRC 103217 / DC2201).